A 1124-amino-acid chain; its full sequence is SH3 and PX domain-containing protein 2A (1124 aa).

In terms of domain architecture, PX spans 4–128 (YCVQDATVVD…RFFEARPEDV (125 aa)). The SH3 1 domain maps to 166–225 (MILEQYVVVSNYKKQENSELSLQAGEVVDVIEKNESGWWFVSTSEEQGWVPATYLEAQNG). The residue at position 256 (Thr-256) is a Phosphothreonine. Positions 266–325 (SREEKYVTVQPYTSQSKDEIGFEKGVTVEVIRKNLEGWWYIRYLGKEGWAPASYLKKAKD) constitute an SH3 2 domain. A phosphoserine mark is found at Ser-405 and Ser-420. 4 disordered regions span residues 414–443 (QRAQISSPNLRTRPPPRRESSLGFQLPKPP), 504–672 (RKKP…KLKA), 692–830 (SVTI…PKKE), and 886–952 (YLVA…GKTS). One can recognise an SH3 3 domain in the interval 447 to 506 (SVEVEYYTIAEFQSCISDGISFRGGQKAEVIDKNSGGWWYVQIGEKEGWAPASYIDKRKK). Phosphoserine occurs at positions 546 and 566. Residues 575-585 (SGDRGSGDKHP) show a composition bias toward basic and acidic residues. Ser-592 is subject to Phosphoserine. Over residues 607-619 (SSEDVALEEETIY) the composition is skewed to acidic residues. Low complexity-rich tracts occupy residues 633-669 (SARGSSGDSDSPGSSSLSLAVKNSPKSDSPKSSSLLK) and 692-709 (SVTISTTCSSSSSSSSLS). A Phosphoserine modification is found at Ser-643. Residues 713–739 (GDLKPRSASDAGIRDTPKVGTKKDPDV) are compositionally biased toward basic and acidic residues. Residue Thr-728 is modified to Phosphothreonine. Phosphoserine occurs at positions 764, 766, and 812. Thr-822 carries the post-translational modification Phosphothreonine. Residues 833–892 (GQGATYVTCSAYQKVQDSEISFPEGAEVHVLEKAESGWWYVRFGELEGWAPSHYLVAEEN) form the SH3 4 domain. The stretch at 907-937 (SSQNEGKSDSLEKIEKRVQALNTVNQSKRAT) forms a coiled coil. Residues 912–924 (GKSDSLEKIEKRV) are compositionally biased toward basic and acidic residues. The span at 926 to 935 (ALNTVNQSKR) shows a compositional bias: polar residues. 4 positions are modified to phosphoserine: Ser-993, Ser-1007, Ser-1008, and Ser-1029. The interval 1020 to 1050 (KGRLAERAASQGSESPLLPTQRKGIPVSPVR) is disordered. In terms of domain architecture, SH3 5 spans 1063–1124 (NLKDVYISIA…VPSNYLEKKN (62 aa)).

The protein belongs to the SH3PXD2 family. In terms of assembly, interacts with ADAM12, ADAM15 and ADAM19. Interacts with NOXO1. Interacts (via SH3 domains) with NOXA1; the interaction is direct. Interacts (via N-terminus) with CYBA. Interacts with FASLG. Interacts (via PX domain) with RAB40B (GTP-bound); interaction promotes invadopodia-mediated extracellular matrix degradation. Tyrosine phosphorylated by SRC. Phosphorylation plays a regulatory role in the protein localization. The intramolecular interaction of the PX domain with the third SH3 domain maintains the protein in the cytoplasm and phosphorylation disrupts this interaction, resulting in the redistribution of the protein from cytoplasm to the perimembrane region. Phosphorylated on serine upon DNA damage, probably by ATM or ATR. In terms of tissue distribution, widely expressed. Not found in the spleen and testis.

Its subcellular location is the cytoplasm. The protein localises to the cell projection. The protein resides in the podosome. Adapter protein involved in invadopodia and podosome formation, extracellular matrix degradation and invasiveness of some cancer cells. Binds matrix metalloproteinases (ADAMs), NADPH oxidases (NOXs) and phosphoinositides. Acts as an organizer protein that allows NOX1- or NOX3-dependent reactive oxygen species (ROS) generation and ROS localization. In association with ADAM12, mediates the neurotoxic effect of amyloid-beta peptide. The polypeptide is SH3 and PX domain-containing protein 2A (Mus musculus (Mouse)).